We begin with the raw amino-acid sequence, 1975 residues long: Cadherin-87A (1975 aa).

Residues 1–17 (MKLPLGLLMICLGLTLA) form the signal peptide. The Extracellular segment spans residues 18–1775 (KGETNLPPVF…AIVQDEFDLA (1758 aa)). Cadherin domains follow at residues 28 to 132 (TQTL…PPEF), 133 to 245 (QNTP…PPVF), 246 to 358 (QGSL…PPVF), 359 to 472 (NHKE…KPVF), 473 to 669 (EQES…PPVC), 670 to 774 (ESPL…VPNF), 775 to 878 (EQQS…DPYF), 879 to 998 (VPAT…PPRF), 999 to 1103 (NAPW…DPKF), 1104 to 1211 (SQSD…APVF), 1212 to 1318 (TRDV…KPEF), 1319 to 1431 (VIPA…RPEF), 1432 to 1553 (PDAS…PPVF), and 1554 to 1677 (EKPI…PPEE). 3 N-linked (GlcNAc...) asparagine glycosylation sites follow: Asn39, Asn77, and Asn203. Residue Asn424 is glycosylated (N-linked (GlcNAc...) asparagine). Residues 535-560 (CHDNGESNRRERRDLNEDEHVEEDDG) form a disordered region. The segment covering 537–549 (DNGESNRRERRDL) has biased composition (basic and acidic residues). Acidic residues predominate over residues 550 to 560 (NEDEHVEEDDG). N-linked (GlcNAc...) asparagine glycosylation is found at Asn730 and Asn761. N-linked (GlcNAc...) asparagine glycans are attached at residues Asn1039, Asn1049, Asn1111, Asn1163, Asn1217, Asn1325, Asn1349, Asn1492, Asn1576, and Asn1691. The helical transmembrane segment at 1776–1796 (VAGLVALVIVLFVGVISFIVL) threads the bilayer. The Cytoplasmic portion of the chain corresponds to 1797–1975 (CCCLKHWNLS…DGDDAVAELI (179 aa)). Polar residues predominate over residues 1887–1899 (YATIQPRNNQNRL). Residues 1887–1916 (YATIQPRNNQNRLTGGGGAGGGSMRSGGGA) are disordered. Residues 1900 to 1916 (TGGGGAGGGSMRSGGGA) are compositionally biased toward gly residues.

The protein resides in the cell membrane. Cadherins are calcium-dependent cell adhesion proteins. They preferentially interact with themselves in a homophilic manner in connecting cells. In Drosophila melanogaster (Fruit fly), this protein is Cadherin-87A (Cad87A).